We begin with the raw amino-acid sequence, 310 residues long: Aspartate carbamoyltransferase catalytic subunit (310 aa).

Residues R58 and T59 each contribute to the carbamoyl phosphate site. K86 lines the L-aspartate pocket. Positions 108, 136, and 139 each coordinate carbamoyl phosphate. 2 residues coordinate L-aspartate: R169 and R222. Carbamoyl phosphate contacts are provided by G264 and P265.

It belongs to the aspartate/ornithine carbamoyltransferase superfamily. ATCase family. As to quaternary structure, heterododecamer (2C3:3R2) of six catalytic PyrB chains organized as two trimers (C3), and six regulatory PyrI chains organized as three dimers (R2).

The catalysed reaction is carbamoyl phosphate + L-aspartate = N-carbamoyl-L-aspartate + phosphate + H(+). It participates in pyrimidine metabolism; UMP biosynthesis via de novo pathway; (S)-dihydroorotate from bicarbonate: step 2/3. In terms of biological role, catalyzes the condensation of carbamoyl phosphate and aspartate to form carbamoyl aspartate and inorganic phosphate, the committed step in the de novo pyrimidine nucleotide biosynthesis pathway. In Campylobacter fetus subsp. fetus (strain 82-40), this protein is Aspartate carbamoyltransferase catalytic subunit.